The sequence spans 460 residues: V-type ATP synthase beta chain 2 (460 aa).

It belongs to the ATPase alpha/beta chains family.

Functionally, produces ATP from ADP in the presence of a proton gradient across the membrane. The V-type beta chain is a regulatory subunit. The sequence is that of V-type ATP synthase beta chain 2 from Clostridium tetani (strain Massachusetts / E88).